The chain runs to 311 residues: Aspartate carbamoyltransferase catalytic subunit (311 aa).

Residues Arg-55 and Thr-56 each coordinate carbamoyl phosphate. Lys-85 serves as a coordination point for L-aspartate. Residues Arg-106, His-135, and Gln-138 each contribute to the carbamoyl phosphate site. Positions 168 and 230 each coordinate L-aspartate. Positions 268 and 269 each coordinate carbamoyl phosphate.

The protein belongs to the aspartate/ornithine carbamoyltransferase superfamily. ATCase family. Heterododecamer (2C3:3R2) of six catalytic PyrB chains organized as two trimers (C3), and six regulatory PyrI chains organized as three dimers (R2).

The catalysed reaction is carbamoyl phosphate + L-aspartate = N-carbamoyl-L-aspartate + phosphate + H(+). It participates in pyrimidine metabolism; UMP biosynthesis via de novo pathway; (S)-dihydroorotate from bicarbonate: step 2/3. Catalyzes the condensation of carbamoyl phosphate and aspartate to form carbamoyl aspartate and inorganic phosphate, the committed step in the de novo pyrimidine nucleotide biosynthesis pathway. This is Aspartate carbamoyltransferase catalytic subunit from Yersinia pestis.